Consider the following 288-residue polypeptide: Protoheme IX farnesyltransferase (288 aa).

9 helical membrane passes run 8–28 (ATKPGIVLSNLMSFIGGFLLA), 35–55 (YLIFLVTLLGVLFIVTAGCVL), 80–100 (ISILTCLIYALICSIIGIYLL), 107–127 (LTMLLAIIGLIVYVGIYTKCM), 132–152 (IYSTIIGSFSGAIPPVIGYCA), 162–182 (LLLLLIFCLWQMPHSYAIAIL), 208–228 (IVIYIVAFIVTTILLNISGYT), 229–249 (TSYQYLIVTNFINFWWLYLAL), and 266–286 (FIFSIIAITSLSLMMSLDSIF).

Belongs to the UbiA prenyltransferase family. Protoheme IX farnesyltransferase subfamily.

It localises to the cell membrane. It catalyses the reaction heme b + (2E,6E)-farnesyl diphosphate + H2O = Fe(II)-heme o + diphosphate. It participates in porphyrin-containing compound metabolism; heme O biosynthesis; heme O from protoheme: step 1/1. In terms of biological role, converts heme B (protoheme IX) to heme O by substitution of the vinyl group on carbon 2 of heme B porphyrin ring with a hydroxyethyl farnesyl side group. This chain is Protoheme IX farnesyltransferase, found in Baumannia cicadellinicola subsp. Homalodisca coagulata.